The primary structure comprises 127 residues: Fluoride-specific ion channel FluC (127 aa).

The next 4 membrane-spanning stretches (helical) occupy residues 8–28, 37–57, 68–88, and 100–120; these read LLIA…QYWF, PWGT…VYAI, WKFL…TFSY, and ILFL…AFAG. Residues Gly78 and Thr81 each contribute to the Na(+) site.

It belongs to the fluoride channel Fluc/FEX (TC 1.A.43) family.

The protein resides in the cell inner membrane. The catalysed reaction is fluoride(in) = fluoride(out). With respect to regulation, na(+) is not transported, but it plays an essential structural role and its presence is essential for fluoride channel function. Its function is as follows. Fluoride-specific ion channel. Important for reducing fluoride concentration in the cell, thus reducing its toxicity. The chain is Fluoride-specific ion channel FluC from Leptospira interrogans serogroup Icterohaemorrhagiae serovar copenhageni (strain Fiocruz L1-130).